The chain runs to 442 residues: NAD(P)H sulfur oxidoreductase (CoA-dependent) (442 aa).

13 to 14 contacts FAD; sequence AA. Arg24 lines the CoA pocket. FAD contacts are provided by residues 35-36 and 42-44; these read EA and HAP. CoA-binding positions include 41 to 45, 62 to 63, and Arg72; these read SHAPC and HY. The active-site Redox-active is the Cys45. Val82, Asp280, and Ala298 together coordinate FAD. 2 residues coordinate CoA: Asn302 and Lys358. Position 422 (Tyr422) interacts with FAD. Residues Trp430 and Arg438 each contribute to the CoA site.

This sequence belongs to the class-III pyridine nucleotide-disulfide oxidoreductase family. As to quaternary structure, homodimer. FAD is required as a cofactor.

It localises to the cytoplasm. The enzyme catalyses hydrogen sulfide + NADP(+) = sulfur + NADPH. The catalysed reaction is hydrogen sulfide + NAD(+) = sulfur + NADH. It catalyses the reaction NADP(+) + 2 CoA = CoA-disulfide + NADPH + H(+). It carries out the reaction NAD(+) + 2 CoA = CoA-disulfide + NADH + H(+). Catalyzes the CoA-dependent reduction of elemental sulfur (S(0)) to produce hydrogen sulfide. Can use both NADPH and NADH, but shows a preference for NADPH. May enable S(0) to be used, via sulfide, for iron-sulfur cluster synthesis by SipA. Also shows coenzyme A disulfide reductase (CoADR) activity with both NADH and NADPH. However, CoADR specific activity is about 20-fold lower than the sulfur reduction assay and CoADR activity appears to be an artifactual side reaction and is not thought to have any physiological relevance. Also shows NAD(P)H oxidase activity with both NADH and NADPH. This chain is NAD(P)H sulfur oxidoreductase (CoA-dependent), found in Pyrococcus furiosus (strain ATCC 43587 / DSM 3638 / JCM 8422 / Vc1).